Reading from the N-terminus, the 66-residue chain is uncharacterized protein (66 aa).

2 helical membrane-spanning segments follow: residues 5-25 (ALIVILILLPFVQLALLPLVN) and 30-50 (IMFGLPFFHFWLLLWIIVTPL).

The protein localises to the cell membrane. This is an uncharacterized protein from Bacillus subtilis (strain 168).